A 196-amino-acid polypeptide reads, in one-letter code: Beta-crystallin A2 (196 aa).

Residues 1–11 (MTSEAMDTLGQ) form an N-terminal arm region. Beta/gamma crystallin 'Greek key' domains follow at residues 12–51 (YKIT…KVES) and 52–98 (GPWV…RPVK). Positions 99 to 104 (CANHND) are connecting peptide. Beta/gamma crystallin 'Greek key' domains are found at residues 105–146 (SKAI…KVNA) and 147–195 (GAWV…RRIQ).

The protein belongs to the beta/gamma-crystallin family. In terms of assembly, homo/heterodimer, or complexes of higher-order. The structure of beta-crystallin oligomers seems to be stabilized through interactions between the N-terminal arms.

In terms of biological role, crystallins are the dominant structural components of the vertebrate eye lens. In Gallus gallus (Chicken), this protein is Beta-crystallin A2 (CRYBA2).